The chain runs to 362 residues: MTQNYRITLLPGDGIGPEIMAVAVDVLKVVGQQFDIQFDFQEALIGGAAIDATGEPLPSATLDTCRQSDAVLLAAIGGYKWDSLPPHQRPEGGLLGLRAGLELFANLRPAQILPQLIDASTLKREVVEGVDIMVVRELTGGIYFGKPRGIFTTETGEKRGVNTMVYTESEIDRIGRIAFETARKRRGKLCSVDKANVLDVSQLWRDRITKLSQEYPDVELSHLYVDNAAMQLVRAPKQFDTIVTGNLFGDILSDAAAMLTGSIGMLPSASLGASGPGVFEPVHGSAPDIAGLDKANPLAQVLSAAMMLRYALNQPQAADKIEQAVLQVLEQGDRTGDIMSVGMNLLGCRAMGDSLIKALEKS.

78–91 (GYKWDSLPPHQRPE) provides a ligand contact to NAD(+). Substrate contacts are provided by arginine 98, arginine 108, arginine 136, and aspartate 226. Residues aspartate 226, aspartate 250, and aspartate 254 each contribute to the Mg(2+) site. 284-296 (GSAPDIAGLDKAN) is an NAD(+) binding site.

Belongs to the isocitrate and isopropylmalate dehydrogenases family. LeuB type 1 subfamily. Homodimer. It depends on Mg(2+) as a cofactor. Mn(2+) serves as cofactor.

The protein localises to the cytoplasm. It catalyses the reaction (2R,3S)-3-isopropylmalate + NAD(+) = 4-methyl-2-oxopentanoate + CO2 + NADH. It functions in the pathway amino-acid biosynthesis; L-leucine biosynthesis; L-leucine from 3-methyl-2-oxobutanoate: step 3/4. Catalyzes the oxidation of 3-carboxy-2-hydroxy-4-methylpentanoate (3-isopropylmalate) to 3-carboxy-4-methyl-2-oxopentanoate. The product decarboxylates to 4-methyl-2 oxopentanoate. In Trichormus variabilis (strain ATCC 29413 / PCC 7937) (Anabaena variabilis), this protein is 3-isopropylmalate dehydrogenase.